Here is a 366-residue protein sequence, read N- to C-terminus: Latent membrane protein 1 (366 aa).

Over 1–23 the chain is Cytoplasmic; that stretch reads MERDLERGPPGPPRPPLGPPLSS. A helical membrane pass occupies residues 24–44; that stretch reads SIGLALLLLLLALLFWLYIVL. Residues 45 to 51 are Extracellular-facing; sequence SNWTGGA. Residues 52–72 form a helical membrane-spanning segment; it reads LLVLYSFALMLIIIILIIFIF. Topologically, residues 73-75 are cytoplasmic; the sequence is RRD. Residues 76–96 form a helical membrane-spanning segment; that stretch reads LLCPLGGLGLLLLMVTLLLIA. Residues 97–106 are Extracellular-facing; the sequence is LWNLHGQALY. A helical membrane pass occupies residues 107–127; the sequence is LGIVLFIFGCLLVLGLWIYFL. Over 128-139 the chain is Cytoplasmic; it reads EILWRLGATIWQ. A helical transmembrane segment spans residues 140-160; sequence LLAFILAFFLAIILLIIALYL. Over 161 to 163 the chain is Extracellular; that stretch reads QQN. Residues 164-184 form a helical membrane-spanning segment; the sequence is WWTLLVDLLWLLLFMAILIWM. Residues 185 to 366 are Cytoplasmic-facing; sequence YFHGPRHTDE…HGPVQLSYYD (182 aa). The tract at residues 194–232 is CTAR1; it reads EHHHDDSLPHPQQATDDSSHESDSNSNEGRHHLLVSGAG. Residues 194-366 form a disordered region; the sequence is EHHHDDSLPH…HGPVQLSYYD (173 aa). The Interaction with host TRAF proteins signature appears at 204-208; it reads PQQAT. Positions 210–224 are enriched in basic and acidic residues; that stretch reads DSSHESDSNSNEGRH. Low complexity-rich tracts occupy residues 251-267 and 337-346; these read NGPQDPDNTDDNGPQDP and PHLPTLLLGT. The CTAR2 stretch occupies residues 332-366; that stretch reads GGGGDPHLPTLLLGTSGSGGDDDDPHGPVQLSYYD.

The protein belongs to the herpesviridae LMP-1 family. In terms of assembly, interacts (via PXQXT motif) with host tumor necrosis factor receptor-associated factor (TRAF) proteins TRAF1, TRAF2, TRAF3 and TRAF5. Interacts with human protein ZMYND11; leading to negatively regulate NF-kappa-B activation. Interacts with host UBE2I; this interaction induces the sumoylation of various cellular proteins. Interacts with host IRF7. In terms of processing, ubiquitinated on the N-terminus.

It localises to the host cell membrane. Functionally, acts as a CD40 functional homolog to prevent apoptosis of infected B-lymphocytes and drive their proliferation. Functions as a constitutively active tumor necrosis factor receptor that induces the activation of several signaling pathways, including those of the NF-kappa-B family. LMP1 signaling leads to up-regulation of antiapoptotic proteins and provide growth signals in latently infected cells. Interacts with host UBE2I and subsequently affects the sumoylation state of several cellular proteins. For example, induces the sumoylation of host IRF7 thereby limiting its transcriptional activity and modulating the activation of innate immune responses. Also inhibits host IFN-alpha-stimulated STAT2 nuclear translocation and interferon-stimulated response element transcriptional activity by interacting with and inhibiting host TYK2. Induces SUMO expression during viral latency thereby dysregulating the host sumoylation processes. This chain is Latent membrane protein 1 (LMP1), found in Homo sapiens (Human).